The primary structure comprises 141 residues: Hydroperoxide reductase (141 aa).

The protein belongs to the OsmC/Ohr family. Homodimer.

Its subcellular location is the cytoplasm. Reduces organic and inorganic peroxide substrates. Protects the cell against oxidative stress. In Mycoplasma genitalium (strain ATCC 33530 / DSM 19775 / NCTC 10195 / G37) (Mycoplasmoides genitalium), this protein is Hydroperoxide reductase.